Reading from the N-terminus, the 123-residue chain is uncharacterized protein (123 aa).

Residues K31–E57 show a composition bias toward basic and acidic residues. The interval K31–K58 is disordered. The chain crosses the membrane as a helical span at residues I91–I111.

Its subcellular location is the membrane. This is an uncharacterized protein from Mycoplasma genitalium (strain ATCC 33530 / DSM 19775 / NCTC 10195 / G37) (Mycoplasmoides genitalium).